The sequence spans 531 residues: Pyruvate kinase (531 aa).

Arg86 lines the substrate pocket. Asn88, Ser90, Asp121, and Thr122 together coordinate K(+). 88–91 (NFSH) is an ATP binding site. ATP is bound by residues Arg128 and Lys211. A Mg(2+)-binding site is contributed by Glu277. Residues Gly300, Asp301, and Thr333 each coordinate substrate. Asp301 contacts Mg(2+).

This sequence belongs to the pyruvate kinase family. Homotetramer. It depends on Mg(2+) as a cofactor. Requires K(+) as cofactor.

It catalyses the reaction pyruvate + ATP = phosphoenolpyruvate + ADP + H(+). It participates in carbohydrate degradation; glycolysis; pyruvate from D-glyceraldehyde 3-phosphate: step 5/5. In Eimeria tenella (Coccidian parasite), this protein is Pyruvate kinase (PYK).